The chain runs to 343 residues: Glycerol-3-phosphate dehydrogenase [NAD(P)+] (343 aa).

The NADPH site is built by S11, W12, R32, and K106. Residues K106, G137, and S139 each coordinate sn-glycerol 3-phosphate. A141 provides a ligand contact to NADPH. Positions 192, 245, 255, 256, and 257 each coordinate sn-glycerol 3-phosphate. Catalysis depends on K192, which acts as the Proton acceptor. R256 lines the NADPH pocket. Residues V280 and E282 each coordinate NADPH.

It belongs to the NAD-dependent glycerol-3-phosphate dehydrogenase family.

It is found in the cytoplasm. The enzyme catalyses sn-glycerol 3-phosphate + NAD(+) = dihydroxyacetone phosphate + NADH + H(+). It catalyses the reaction sn-glycerol 3-phosphate + NADP(+) = dihydroxyacetone phosphate + NADPH + H(+). The protein operates within membrane lipid metabolism; glycerophospholipid metabolism. Functionally, catalyzes the reduction of the glycolytic intermediate dihydroxyacetone phosphate (DHAP) to sn-glycerol 3-phosphate (G3P), the key precursor for phospholipid synthesis. This chain is Glycerol-3-phosphate dehydrogenase [NAD(P)+], found in Syntrophomonas wolfei subsp. wolfei (strain DSM 2245B / Goettingen).